The sequence spans 458 residues: UPF0210 protein MJ1665 (458 aa).

Belongs to the UPF0210 family.

The protein is UPF0210 protein MJ1665 of Methanocaldococcus jannaschii (strain ATCC 43067 / DSM 2661 / JAL-1 / JCM 10045 / NBRC 100440) (Methanococcus jannaschii).